The sequence spans 201 residues: 3-isopropylmalate dehydratase small subunit (201 aa).

The protein belongs to the LeuD family. LeuD type 1 subfamily. In terms of assembly, heterodimer of LeuC and LeuD.

The catalysed reaction is (2R,3S)-3-isopropylmalate = (2S)-2-isopropylmalate. It participates in amino-acid biosynthesis; L-leucine biosynthesis; L-leucine from 3-methyl-2-oxobutanoate: step 2/4. In terms of biological role, catalyzes the isomerization between 2-isopropylmalate and 3-isopropylmalate, via the formation of 2-isopropylmaleate. The polypeptide is 3-isopropylmalate dehydratase small subunit (Escherichia fergusonii (strain ATCC 35469 / DSM 13698 / CCUG 18766 / IAM 14443 / JCM 21226 / LMG 7866 / NBRC 102419 / NCTC 12128 / CDC 0568-73)).